The sequence spans 152 residues: Small ribosomal subunit protein bS6 (152 aa).

The disordered stretch occupies residues 96–152; the sequence is HEEGPSAMLQKRDRDDRGPREGGDRGPRREFGDRPPRRDGDFQRGPRPDRAPREDRA.

The protein belongs to the bacterial ribosomal protein bS6 family.

Binds together with bS18 to 16S ribosomal RNA. This is Small ribosomal subunit protein bS6 from Rhizobium etli (strain ATCC 51251 / DSM 11541 / JCM 21823 / NBRC 15573 / CFN 42).